A 104-amino-acid polypeptide reads, in one-letter code: DNA-directed RNA polymerase subunit omega (104 aa).

The protein belongs to the RNA polymerase subunit omega family. The RNAP catalytic core consists of 2 alpha, 1 beta, 1 beta' and 1 omega subunit. When a sigma factor is associated with the core the holoenzyme is formed, which can initiate transcription.

The enzyme catalyses RNA(n) + a ribonucleoside 5'-triphosphate = RNA(n+1) + diphosphate. Promotes RNA polymerase assembly. Latches the N- and C-terminal regions of the beta' subunit thereby facilitating its interaction with the beta and alpha subunits. The sequence is that of DNA-directed RNA polymerase subunit omega from Streptococcus suis (strain 05ZYH33).